A 187-amino-acid polypeptide reads, in one-letter code: Methylamine dehydrogenase light chain (187 aa).

The segment at residues 1 to 57 (MKKDTGFDSKIEKLARTTASKTGRRGFIGRLGGFLVGSALLPLLPVDRRSRLGGEVQ) is a signal peptide (tat-type signal). 6 cysteine pairs are disulfide-bonded: cysteine 79–cysteine 144, cysteine 85–cysteine 117, cysteine 92–cysteine 177, cysteine 94–cysteine 142, cysteine 102–cysteine 133, and cysteine 134–cysteine 165. Tryptophan 113 is modified (tryptophylquinone). Residues 113–164 (WVASCYNPGDQQTYLIAYRDCCGKQTCGRCNCVNTQGELPVYRPEFNNDIVW) constitute a cross-link (tryptophan tryptophylquinone (Trp-Trp)).

Belongs to the aromatic amine dehydrogenase light chain family. In terms of assembly, heterotetramer of two light and two heavy chains. It depends on tryptophan tryptophylquinone residue as a cofactor. Predicted to be exported by the Tat system. The position of the signal peptide cleavage has not been experimentally proven. In terms of processing, tryptophan tryptophylquinone (TTQ) is formed by oxidation of the indole ring of a tryptophan to form tryptophylquinone followed by covalent cross-linking with another tryptophan residue.

The protein resides in the periplasm. It carries out the reaction 2 oxidized [amicyanin] + methylamine + H2O = 2 reduced [amicyanin] + formaldehyde + NH4(+) + 2 H(+). It functions in the pathway one-carbon metabolism; methylamine degradation; formaldehyde from methylamine: step 1/1. Methylamine dehydrogenase carries out the oxidation of methylamine. Electrons are passed from methylamine dehydrogenase to amicyanin. The chain is Methylamine dehydrogenase light chain (mauA) from Methylophilus methylotrophus (Bacterium W3A1).